The primary structure comprises 61 residues: UPF0434 protein PSEEN1604 (61 aa).

Belongs to the UPF0434 family.

This chain is UPF0434 protein PSEEN1604, found in Pseudomonas entomophila (strain L48).